The following is a 377-amino-acid chain: Chaperone protein DnaJ (377 aa).

The J domain occupies 5-70 (DYYEVLGVGK…EKKAAYDQYG (66 aa)). A CR-type zinc finger spans residues 137–215 (GHEAQIRVPH…CHGQGKLKSQ (79 aa)). 8 residues coordinate Zn(2+): Cys-150, Cys-153, Cys-167, Cys-170, Cys-189, Cys-192, Cys-203, and Cys-206. 4 CXXCXGXG motif repeats span residues 150–157 (CDHCHGNG), 167–174 (CPTCHGAG), 189–196 (CPKCHGSG), and 203–210 (CTKCHGQG).

It belongs to the DnaJ family. As to quaternary structure, homodimer. Zn(2+) serves as cofactor.

It is found in the cytoplasm. Participates actively in the response to hyperosmotic and heat shock by preventing the aggregation of stress-denatured proteins and by disaggregating proteins, also in an autonomous, DnaK-independent fashion. Unfolded proteins bind initially to DnaJ; upon interaction with the DnaJ-bound protein, DnaK hydrolyzes its bound ATP, resulting in the formation of a stable complex. GrpE releases ADP from DnaK; ATP binding to DnaK triggers the release of the substrate protein, thus completing the reaction cycle. Several rounds of ATP-dependent interactions between DnaJ, DnaK and GrpE are required for fully efficient folding. Also involved, together with DnaK and GrpE, in the DNA replication of plasmids through activation of initiation proteins. The polypeptide is Chaperone protein DnaJ (Cupriavidus taiwanensis (strain DSM 17343 / BCRC 17206 / CCUG 44338 / CIP 107171 / LMG 19424 / R1) (Ralstonia taiwanensis (strain LMG 19424))).